We begin with the raw amino-acid sequence, 433 residues long: Metacaspase-1 (433 aa).

The interval M1–P123 is disordered. Low complexity predominate over residues T9–Q44. 2 stretches are compositionally biased toward polar residues: residues N45–H55 and Q83–Q109. Active-site residues include H222 and C278.

The protein belongs to the peptidase C14B family.

In terms of biological role, involved in cell death (apoptosis). In Kluyveromyces lactis (strain ATCC 8585 / CBS 2359 / DSM 70799 / NBRC 1267 / NRRL Y-1140 / WM37) (Yeast), this protein is Metacaspase-1 (MCA1).